The primary structure comprises 311 residues: Malate dehydrogenase (311 aa).

NAD(+)-binding positions include 7-13 (GAAGGIG) and D34. 2 residues coordinate substrate: R81 and R87. NAD(+)-binding positions include N94 and 117–119 (ITN). Substrate contacts are provided by N119 and R153. H177 (proton acceptor) is an active-site residue. M227 contacts NAD(+).

This sequence belongs to the LDH/MDH superfamily. MDH type 1 family. In terms of assembly, homodimer.

It carries out the reaction (S)-malate + NAD(+) = oxaloacetate + NADH + H(+). Functionally, catalyzes the reversible oxidation of malate to oxaloacetate. In Vibrio atlanticus (strain LGP32) (Vibrio splendidus (strain Mel32)), this protein is Malate dehydrogenase.